Here is a 506-residue protein sequence, read N- to C-terminus: NADH-quinone oxidoreductase subunit N 2 (506 aa).

14 helical membrane-spanning segments follow: residues Ser-11–Trp-31, Leu-44–Ala-64, Phe-82–Val-102, Ser-117–Ser-137, Leu-140–Phe-160, Val-175–Ile-195, Val-222–Phe-242, Pro-254–Ile-274, Gly-289–Gly-309, Leu-323–Gly-345, Tyr-356–Gly-376, Ala-394–Ile-414, Leu-419–Val-439, and Leu-472–Gly-492.

This sequence belongs to the complex I subunit 2 family. As to quaternary structure, NDH-1 is composed of 14 different subunits. Subunits NuoA, H, J, K, L, M, N constitute the membrane sector of the complex.

The protein resides in the cell inner membrane. The enzyme catalyses a quinone + NADH + 5 H(+)(in) = a quinol + NAD(+) + 4 H(+)(out). NDH-1 shuttles electrons from NADH, via FMN and iron-sulfur (Fe-S) centers, to quinones in the respiratory chain. The immediate electron acceptor for the enzyme in this species is believed to be ubiquinone. Couples the redox reaction to proton translocation (for every two electrons transferred, four hydrogen ions are translocated across the cytoplasmic membrane), and thus conserves the redox energy in a proton gradient. The sequence is that of NADH-quinone oxidoreductase subunit N 2 from Sorangium cellulosum (strain So ce56) (Polyangium cellulosum (strain So ce56)).